The primary structure comprises 675 residues: Methionine--tRNA ligase (675 aa).

The short motif at 15–25 (PYANGSIHLGH) is the 'HIGH' region element. Positions 146, 149, 159, and 162 each coordinate Zn(2+). The 'KMSKS' region motif lies at 332–336 (KMSKS). Lys335 provides a ligand contact to ATP. In terms of domain architecture, tRNA-binding spans 573–675 (DFAKVDMRIA…SGAQPGMQVK (103 aa)).

This sequence belongs to the class-I aminoacyl-tRNA synthetase family. MetG type 1 subfamily. In terms of assembly, homodimer. Zn(2+) is required as a cofactor.

It localises to the cytoplasm. The enzyme catalyses tRNA(Met) + L-methionine + ATP = L-methionyl-tRNA(Met) + AMP + diphosphate. In terms of biological role, is required not only for elongation of protein synthesis but also for the initiation of all mRNA translation through initiator tRNA(fMet) aminoacylation. The sequence is that of Methionine--tRNA ligase from Serratia proteamaculans (strain 568).